The sequence spans 333 residues: Taste receptor type 2 member 38 (333 aa).

Over 1–17 the chain is Extracellular; the sequence is MLTLTRIHTVSYEVRST. Residues 18-38 form a helical membrane-spanning segment; the sequence is FLFISVLEFAVGFLTNAFVFL. Topologically, residues 39–55 are cytoplasmic; sequence VNFWDVVKRQPLSNSDC. The chain crosses the membrane as a helical span at residues 56 to 76; that stretch reads VLLCLSISRLFLHGLLFLSAI. At 77 to 94 the chain is on the extracellular side; it reads QLTHFQKLSEPLNHSYQA. A helical membrane pass occupies residues 95–115; sequence INMLWMIANQANLWLAACLSL. Topologically, residues 116–142 are cytoplasmic; the sequence is LYCSKLIRFSHTFLICLASWVSRKISQ. A helical transmembrane segment spans residues 143–163; it reads MLLGIILCSCICTVLCVWCFF. Over 164 to 190 the chain is Extracellular; that stretch reads SRPHFTVTTVLFMNNNTRLNWQIKDLN. An N-linked (GlcNAc...) asparagine glycan is attached at N178. The helical transmembrane segment at 191–211 threads the bilayer; it reads LFYSFLFCYLWSVPPFLLFLV. The Cytoplasmic segment spans residues 212–251; the sequence is SSGMLTVSLGRHMRTMKVYTRDSRDPSLEAHIKALKSLVS. The chain crosses the membrane as a helical span at residues 252–272; sequence FFCFFVISSCAAFISVPLLIL. The Extracellular segment spans residues 273–276; the sequence is WRDK. A helical transmembrane segment spans residues 277–297; it reads IGVMVCVGIMAACPSGHAAVL. Residues 298 to 333 are Cytoplasmic-facing; it reads ISGNAKLRRAVTTILLWAQSSLKVRADHKADSRTLC.

This sequence belongs to the G-protein coupled receptor T2R family.

Its subcellular location is the membrane. In terms of biological role, receptor that may play a role in the perception of bitterness and is gustducin-linked. May play a role in sensing the chemical composition of the gastrointestinal content. The activity of this receptor may stimulate alpha gustducin, mediate PLC-beta-2 activation and lead to the gating of TRPM5. This is Taste receptor type 2 member 38 (TAS2R38) from Pan paniscus (Pygmy chimpanzee).